Reading from the N-terminus, the 474-residue chain is Myocyte-specific enhancer factor 2C (474 aa).

Residues 3 to 57 (RKKIQITRIMDERNRQVTFTKRKFGLMKKAYELSVLCDCEIALIIFNSTNKLFQY) form the MADS-box domain. K4 carries the N6-acetyllysine modification. The mef2-type DNA-binding region spans 58–86 (ASTDMDKVLLKYTEYNEPHESRTNSDIVE). S59 carries the post-translational modification Phosphoserine; by CK2. A disordered region spans residues 91–118 (KGLNGCDSPDPDADDSVGHSPESEDKYR). 2 positions are modified to phosphoserine: S98 and S106. G108 carries the phosphothreonine modification. The residue at position 110 (S110) is a Phosphoserine. An N6-acetyllysine mark is found at K116 and K119. 2 positions are modified to phosphoserine: S222 and S228. N6-acetyllysine is present on residues K234 and K239. The residue at position 240 (S240) is a Phosphoserine. N6-acetyllysine occurs at positions 252 and 264. The beta domain stretch occupies residues 271-278 (SEDVDLLL). A phosphothreonine; by MAPK14 mark is found at T293 and T300. Residues 368–399 (ACTSTHLSQSSNLSLPSTQSLSIKSEPVSPPR) are transcription repressor. Residues 375–390 (SQSSNLSLPSTQSLSI) show a composition bias toward polar residues. Residues 375-474 (SQSSNLSLPS…RMRLSEGWAT (100 aa)) are disordered. K391 participates in a covalent cross-link: Glycyl lysine isopeptide (Lys-Gly) (interchain with G-Cter in SUMO). S396 is modified (phosphoserine; by CDK5). S420 is modified (phosphoserine; by MAPK7). Positions 420 to 433 (SPVDSLSSCSSSYD) are enriched in low complexity. Over residues 434 to 444 (GSDREDHRNEF) the composition is skewed to basic and acidic residues. S446 bears the Phosphoserine mark.

Belongs to the MEF2 family. Forms a complex with class II HDACs in undifferentiating cells. On myogenic differentiation, HDACs are released into the cytoplasm allowing MEF2s to interact with other proteins for activation. Interacts with EP300 in differentiating cells; the interaction acetylates MEF2C leading to increased DNA binding and activation. Interacts with HDAC7 and CARM1. Interacts with HDAC4, HDAC7 AND HDAC9; the interaction with HDACs represses transcriptional activity. Interacts with LPIN1. Interacts with MYOCD. Interacts with AKAP13. Interacts with FOXK1; the interaction inhibits MEF2C transactivation activity. Interacts (via N-terminus) with HABP4; this interaction decreases DNA-binding activity of MEF2C in myocardial cells in response to mechanical stress. Interacts with JPH2; interaction specifically takes place with the Junctophilin-2 N-terminal fragment cleavage product of JPH2. Interacts (via MADS box) with SOX18. Interacts with PHF7; the interaction promotes MEF2C binding to its transcription targets. In terms of processing, phosphorylation on Ser-59 enhances DNA binding activity. Phosphorylation on Ser-396 is required for Lys-391 sumoylation and inhibits transcriptional activity. Acetylated by p300 on several sites in diffentiating myocytes. Acetylation on Lys-4 increases DNA binding and transactivation. Post-translationally, sumoylated on Lys-391 with SUMO2 but not by SUMO1 represses transcriptional activity. In terms of processing, proteolytically cleaved in cerebellar granule neurons, probably by caspase 7, following neurotoxicity. Preferentially cleaves the CDK5-mediated hyperphosphorylated form which leads to neuron apoptosis and transcriptional inactivation. As to expression, widely expressed though mainly restricted to skeletal and cardiac muscle, brain, neurons and lymphocytes. Beta domain-lacking isoforms are the most predominantly expressed in all tissues including skeletal and cardiac muscle and brain. Only brain expresses all isoforms. Expression occurs primarily in the internal granule cell layer of the olfactory bulb, cortex, thalamus, hippocampus and cerebellum. Low levels in the cerebellum and hindbrain. Expressed throughout the cortex, including the frontal and entorhinal cortex, dentate gyrus, and basolateral amygdala. Selectively expressed in B-cells but not in T-cells, and its expression increases as B-cells mature.

The protein resides in the nucleus. The protein localises to the cytoplasm. It is found in the sarcoplasm. In terms of biological role, transcription activator which binds specifically to the MEF2 element present in the regulatory regions of many muscle-specific genes. Controls cardiac morphogenesis and myogenesis, and is also involved in vascular development. Enhances transcriptional activation mediated by SOX18. May also be involved in neurogenesis and in the development of cortical architecture. Isoforms that lack the repressor domain are more active than isoform 1. Plays an essential role in hippocampal-dependent learning and memory by suppressing the number of excitatory synapses and thus regulating basal and evoked synaptic transmission. Crucial for normal neuronal development, distribution, and electrical activity in the neocortex. Necessary for proper development of megakaryocytes and platelets and for bone marrow B-lymphopoiesis. Required for B-cell survival and proliferation in response to BCR stimulation, efficient IgG1 antibody responses to T-cell-dependent antigens and for normal induction of germinal center B-cells. The sequence is that of Myocyte-specific enhancer factor 2C from Mus musculus (Mouse).